The following is a 176-amino-acid chain: ATP-dependent protease subunit HslV (176 aa).

Threonine 2 is an active-site residue. Residues glycine 157, cysteine 160, and threonine 163 each contribute to the Na(+) site.

This sequence belongs to the peptidase T1B family. HslV subfamily. As to quaternary structure, a double ring-shaped homohexamer of HslV is capped on each side by a ring-shaped HslU homohexamer. The assembly of the HslU/HslV complex is dependent on binding of ATP.

The protein resides in the cytoplasm. The catalysed reaction is ATP-dependent cleavage of peptide bonds with broad specificity.. With respect to regulation, allosterically activated by HslU binding. Protease subunit of a proteasome-like degradation complex believed to be a general protein degrading machinery. The sequence is that of ATP-dependent protease subunit HslV from Marinobacter nauticus (strain ATCC 700491 / DSM 11845 / VT8) (Marinobacter aquaeolei).